The following is a 99-amino-acid chain: SAGA-associated factor 11 (99 aa).

The SGF11-type zinc finger occupies 71-92 (IHCENCGRDVSANRLAAHLQRC).

Belongs to the SGF11 family. Component of the 1.8 MDa SAGA transcription coactivator-HAT complex. SAGA is built of 5 distinct domains with specialized functions. Within the SAGA complex, SUS1, SGF11, SGF73 and UBP8 form an additional subcomplex of SAGA called the DUB module (deubiquitination module). Interacts directly with SGF73, SUS1 and UBP8.

Its subcellular location is the nucleus. Its function is as follows. Functions as a component of the transcription regulatory histone acetylation (HAT) complex SAGA. At the promoters, SAGA is required for recruitment of the basal transcription machinery. It influences RNA polymerase II transcriptional activity through different activities such as TBP interaction and promoter selectivity, interaction with transcription activators, and chromatin modification through histone acetylation and deubiquitination. SAGA acetylates nucleosomal histone H3 to some extent (to form H3K9ac, H3K14ac, H3K18ac and H3K23ac). SAGA interacts with DNA via upstream activating sequences (UASs). Involved in transcriptional regulation of a subset of SAGA-regulated genes. Within the SAGA complex, participates in a subcomplex, that specifically deubiquitinates histones H2B. The protein is SAGA-associated factor 11 of Saccharomyces cerevisiae (strain YJM789) (Baker's yeast).